A 246-amino-acid chain; its full sequence is Probable transcriptional regulatory protein Dshi_2762 (246 aa).

This sequence belongs to the TACO1 family.

It localises to the cytoplasm. The protein is Probable transcriptional regulatory protein Dshi_2762 of Dinoroseobacter shibae (strain DSM 16493 / NCIMB 14021 / DFL 12).